The following is a 577-amino-acid chain: Arginine--tRNA ligase (577 aa).

Residues 122 to 132 (PNVAKEMHVGH) carry the 'HIGH' region motif.

This sequence belongs to the class-I aminoacyl-tRNA synthetase family. Monomer.

It localises to the cytoplasm. It catalyses the reaction tRNA(Arg) + L-arginine + ATP = L-arginyl-tRNA(Arg) + AMP + diphosphate. This chain is Arginine--tRNA ligase, found in Salmonella newport (strain SL254).